The primary structure comprises 833 residues: cGMP-specific 3',5'-cyclic phosphodiesterase (833 aa).

S60 is modified (phosphoserine). Residues 82–101 (FLSDSGKKEQMPLTSPRFDS) form a disordered region. GAF domains follow at residues 122-272 (DVTA…GIVL) and 304-461 (SLEV…GLGI). The PDEase domain occupies 494 to 818 (ETRELQALAA…QKWQALADQQ (325 aa)). H571 (proton donor) is an active-site residue. Zn(2+) contacts are provided by H575, H611, D612, and D722. A Mg(2+)-binding site is contributed by D612. 3',5'-cyclic GMP is bound at residue Q775.

It belongs to the cyclic nucleotide phosphodiesterase family. Zn(2+) is required as a cofactor. Requires Mg(2+) as cofactor. Phosphorylation is regulated by binding of cGMP to the two allosteric sites. Phosphorylation by PRKG1 leads to its activation.

It catalyses the reaction 3',5'-cyclic GMP + H2O = GMP + H(+). It functions in the pathway purine metabolism; 3',5'-cyclic GMP degradation; GMP from 3',5'-cyclic GMP: step 1/1. Its function is as follows. Plays a role in signal transduction by regulating the intracellular concentration of cyclic nucleotides. This phosphodiesterase catalyzes the specific hydrolysis of cGMP to 5'-GMP. Specifically regulates nitric-oxide-generated cGMP. This chain is cGMP-specific 3',5'-cyclic phosphodiesterase (Pde5a), found in Rattus norvegicus (Rat).